The primary structure comprises 1184 residues: DNA-directed RNA polymerase subunit beta (1184 aa).

The protein belongs to the RNA polymerase beta chain family. In terms of assembly, the RNAP catalytic core consists of 2 alpha, 1 beta, 1 beta' and 1 omega subunit. When a sigma factor is associated with the core the holoenzyme is formed, which can initiate transcription.

The enzyme catalyses RNA(n) + a ribonucleoside 5'-triphosphate = RNA(n+1) + diphosphate. DNA-dependent RNA polymerase catalyzes the transcription of DNA into RNA using the four ribonucleoside triphosphates as substrates. In Fusobacterium nucleatum subsp. nucleatum (strain ATCC 25586 / DSM 15643 / BCRC 10681 / CIP 101130 / JCM 8532 / KCTC 2640 / LMG 13131 / VPI 4355), this protein is DNA-directed RNA polymerase subunit beta.